We begin with the raw amino-acid sequence, 246 residues long: 3-deoxy-manno-octulosonate cytidylyltransferase (246 aa).

This sequence belongs to the KdsB family.

The protein localises to the cytoplasm. It carries out the reaction 3-deoxy-alpha-D-manno-oct-2-ulosonate + CTP = CMP-3-deoxy-beta-D-manno-octulosonate + diphosphate. It participates in nucleotide-sugar biosynthesis; CMP-3-deoxy-D-manno-octulosonate biosynthesis; CMP-3-deoxy-D-manno-octulosonate from 3-deoxy-D-manno-octulosonate and CTP: step 1/1. Its pathway is bacterial outer membrane biogenesis; lipopolysaccharide biosynthesis. Functionally, activates KDO (a required 8-carbon sugar) for incorporation into bacterial lipopolysaccharide in Gram-negative bacteria. The chain is 3-deoxy-manno-octulosonate cytidylyltransferase from Rickettsia felis (strain ATCC VR-1525 / URRWXCal2) (Rickettsia azadi).